The primary structure comprises 168 residues: Myosin regulatory light chain 11 (168 aa).

Residue Ala2 is modified to N,N,N-trimethylalanine. Ser15 carries the phosphoserine modification. EF-hand domains lie at 24-59 (TQIQ…MGRL), 94-129 (DPED…QCDR), and 130-165 (FTPE…GEDK). The Ca(2+) site is built by Asp37, Asn39, Asp41, and Asp48.

Myosin is a hexamer of 2 heavy chains and 4 light chains. Post-translationally, the N-terminus is blocked. N,N,N-trimethylalanine, found in other myosin light chains would not have been detected in the N-terminal tryptic peptide in PubMed:7358336 because it would remain trimethylated and ninhydrin negative after hydrolysis.

Its function is as follows. Myosin regulatory subunit that plays an essential to maintain muscle integrity during early development. Plays a role in muscle contraction. The sequence is that of Myosin regulatory light chain 11 (MYL11) from Gallus gallus (Chicken).